Reading from the N-terminus, the 193-residue chain is MAKNAKFRVPFRRRREGKTDFRQRLGLLLSGKPRLVARKSLNNVIAQLMAYDEKGDVVLVSAHSRELVKMGYKGHCGNLPAAYLTGLLLGKKAVKEGAEEAILDKGLHRATKGAAIFAVLKGALDAGMDIPHGDEIIADEERLNGTHVKNYAESLKEDADAYKKQFSKYLEKGLNPEDLPEHVEELKEKILNL.

The protein belongs to the universal ribosomal protein uL18 family. Part of the 50S ribosomal subunit. Contacts the 5S and 23S rRNAs.

In terms of biological role, this is one of the proteins that bind and probably mediate the attachment of the 5S RNA into the large ribosomal subunit, where it forms part of the central protuberance. The protein is Large ribosomal subunit protein uL18 of Methanococcus maripaludis (strain C6 / ATCC BAA-1332).